A 200-amino-acid chain; its full sequence is Alpha/beta-tubulin-N-acetyltransferase 9 (200 aa).

One can recognise an N-acetyltransferase domain in the interval 34 to 181; that stretch reads ETLRELTASE…HEVTLERPIT (148 aa).

It belongs to the acetyltransferase family. GNAT subfamily. In terms of assembly, interacts with microtubules as well as alpha/beta-tubulin heterodimers.

It localises to the nucleus. Its subcellular location is the cytoplasm. It is found in the cytoskeleton. The protein resides in the spindle. The protein localises to the spindle pole. It carries out the reaction N-terminal L-methionyl-[tubulin] + acetyl-CoA = N-terminal N(alpha)-acetyl-L-methionyl-[tubulin] + CoA + H(+). N-acetyltransferase that mediates the acetylation of the N-terminal residues of alpha- and beta-tubulin. Required for microtubule stability and inhibition of JNK signaling to promote cell survival during development, possibly acting independently of its N-acetyltransferase activity. Necessary for the stabilization of spindle microtubules and for mitosis progression. Regulates microtubule stability by inhibiting Spastin-mediated depolymerization and promoting Eb1-mediated polymerization. The sequence is that of Alpha/beta-tubulin-N-acetyltransferase 9 from Drosophila melanogaster (Fruit fly).